The sequence spans 447 residues: MLENIRDAVRKFLTGSTPYEKAVDEFIKELQKSLISSDVNVKLVFSLTAKIKERLNKEKPPSVLERKEWFISIVYDELSKLFGGDKEPNVNPTKLPFIIMLVGVQGSGKTTTAGKLAYFYKRRGYKVGLVAADVYRPAAYDQLLQLGNQIGVPVYGEPNNQNAIEIAKKGVDTFVKNKMDIIIVDTAGRHGYGEETKLLEEMKEIYEALKPDDVILVIDASIGQKAYDLASRFHQASPIGSIIITKMDGTAKGGGALSAVAATGATIKFIGTGEKIDELEIFNAKRYVSRILGMGDIESILEKVKGLEEYEKIQKKMEDVMEGKGKLTLRDVYAQIMALRKMGPLSKVLQHIPGLGVMLPTPSEDQLKLGEEKIRRWLAALNSMTYKELENPSIIDKSRMRRIAEGSGLEVEDVRELLEWYNNMNKLLKMVKRRRGSIDKLFGGKIG.

GTP-binding positions include 103-110 (GVQGSGKT), 185-189 (DTAGR), and 245-248 (TKMD).

It belongs to the GTP-binding SRP family. SRP54 subfamily. Part of the signal recognition particle protein translocation system, which is composed of SRP and FtsY. Archaeal SRP consists of a 7S RNA molecule of 300 nucleotides and two protein subunits: SRP54 and SRP19.

It localises to the cytoplasm. The enzyme catalyses GTP + H2O = GDP + phosphate + H(+). In terms of biological role, involved in targeting and insertion of nascent membrane proteins into the cytoplasmic membrane. Binds to the hydrophobic signal sequence of the ribosome-nascent chain (RNC) as it emerges from the ribosomes. The SRP-RNC complex is then targeted to the cytoplasmic membrane where it interacts with the SRP receptor FtsY. This Saccharolobus islandicus (strain Y.G.57.14 / Yellowstone #1) (Sulfolobus islandicus) protein is Signal recognition particle 54 kDa protein.